The sequence spans 310 residues: HTH-type transcriptional regulator CbbR (310 aa).

An HTH lysR-type domain is found at 7-64; the sequence is ITLKQLRALVAVAGSASLTGGATRLGLTPPAIHSQIRNLEEAFGVPLLHRPPETGSFT. Positions 24-43 form a DNA-binding region, H-T-H motif; it reads LTGGATRLGLTPPAIHSQIR.

This sequence belongs to the LysR transcriptional regulatory family.

Transcriptional activator for the cbb operon for RuBisCO and other Calvin cycle genes. In Cereibacter sphaeroides (Rhodobacter sphaeroides), this protein is HTH-type transcriptional regulator CbbR (cbbR).